We begin with the raw amino-acid sequence, 305 residues long: Nucleotide-binding protein Mjls_2437 (305 aa).

ATP is bound at residue 28–35; that stretch reads GLSGAGRG. 79-82 lines the GTP pocket; that stretch reads DVRS.

This sequence belongs to the RapZ-like family.

Functionally, displays ATPase and GTPase activities. The protein is Nucleotide-binding protein Mjls_2437 of Mycobacterium sp. (strain JLS).